The primary structure comprises 63 residues: Rubredoxin-2 (63 aa).

The region spanning 8–59 is the Rubredoxin-like domain; sequence YKLFRCLQCGFEYDEAIGWPDDGIEPGTRWDEIPEDWSCPDCGAAKVDFEMV. Residues Cys-13, Cys-16, Cys-46, and Cys-49 each coordinate Fe cation.

This sequence belongs to the rubredoxin family. It depends on Fe(3+) as a cofactor.

In terms of biological role, involved in the hydrocarbon hydroxylating system, which transfers electrons from NADH to rubredoxin reductase and then through rubredoxin to alkane 1 monooxygenase. In Rhodococcus erythropolis (Arthrobacter picolinophilus), this protein is Rubredoxin-2 (rubA2).